The chain runs to 512 residues: Zinc metalloprotease mde10 (512 aa).

The first 15 residues, Met1–Ser15, serve as a signal peptide directing secretion. The N-linked (GlcNAc...) asparagine glycan is linked to Asn35. Positions Gln65–Lys306 constitute a Peptidase M12B domain. His229 provides a ligand contact to Zn(2+). The active site involves Glu230. Zn(2+)-binding residues include His233 and His239. 2 cysteine pairs are disulfide-bonded: Cys246/Cys254 and Cys374/Cys394. Residues Leu315–Asp402 enclose the Disintegrin domain. The N-linked (GlcNAc...) asparagine glycan is linked to Asn432.

Zn(2+) is required as a cofactor. In terms of processing, glycosylated.

The protein localises to the endoplasmic reticulum. The protein resides in the spore wall. Its function is as follows. Has a role in the development of the spore envelope. The polypeptide is Zinc metalloprotease mde10 (mde10) (Schizosaccharomyces pombe (strain 972 / ATCC 24843) (Fission yeast)).